The following is a 316-amino-acid chain: CRISPR-associated endonuclease Cas1 (316 aa).

Positions 143, 206, and 221 each coordinate Mn(2+).

This sequence belongs to the CRISPR-associated endonuclease Cas1 family. As to quaternary structure, homodimer, forms a heterotetramer with a Cas2 homodimer. The cofactor is Mg(2+). It depends on Mn(2+) as a cofactor.

In terms of biological role, CRISPR (clustered regularly interspaced short palindromic repeat), is an adaptive immune system that provides protection against mobile genetic elements (viruses, transposable elements and conjugative plasmids). CRISPR clusters contain spacers, sequences complementary to antecedent mobile elements, and target invading nucleic acids. CRISPR clusters are transcribed and processed into CRISPR RNA (crRNA). Acts as a dsDNA endonuclease. Involved in the integration of spacer DNA into the CRISPR cassette. The polypeptide is CRISPR-associated endonuclease Cas1 (Aquifex aeolicus (strain VF5)).